Here is a 380-residue protein sequence, read N- to C-terminus: MAPNIRKSHPLLKMINNSLIDLPTPSNISAWWNFGSLLAVCLITQILTGLLLAMHYTADTTLAFSSVAHTCRNVQYGWLIRNLHANGASFFFICIFLHIGRGLYYGSYLYKETWNTGVILLLTLMATAFVGYVLPWGQMSFWGATVITNLFSAIPYIGQTLVEWAWGGFSVDNPTLTRFFALHFLLPFVIAGITIIHLTFLHESGSNNPLGISSNSDKIPFHPYYSIKDILGLALMFIPFLTLTLFSPNFLGDPENFSPANPLVTPPHIKPEWYFLFAYAILRSIPNKLGGVLALAASVLILLLIPFLHKSKQRTMTFRPLSQTLFWLLVANLLILTWIGSQPVEHPFIIIGQMASLSYFSILLILFPMIGTLENKILNY.

The next 4 membrane-spanning stretches (helical) occupy residues 34–54 (FGSLLAVCLITQILTGLLLAM), 78–99 (WLIRNLHANGASFFFICIFLHI), 114–134 (WNTGVILLLTLMATAFVGYVL), and 179–199 (FFALHFLLPFVIAGITIIHLT). Residues His84 and His98 each coordinate heme b. Residues His183 and His197 each coordinate heme b. His202 serves as a coordination point for a ubiquinone. The next 4 helical transmembrane spans lie at 227 to 247 (IKDILGLALMFIPFLTLTLFS), 289 to 309 (LGGVLALAASVLILLLIPFLH), 321 to 341 (LSQTLFWLLVANLLILTWIGS), and 348 to 368 (FIIIGQMASLSYFSILLILFP).

Belongs to the cytochrome b family. In terms of assembly, the cytochrome bc1 complex contains 11 subunits: 3 respiratory subunits (MT-CYB, CYC1 and UQCRFS1), 2 core proteins (UQCRC1 and UQCRC2) and 6 low-molecular weight proteins (UQCRH/QCR6, UQCRB/QCR7, UQCRQ/QCR8, UQCR10/QCR9, UQCR11/QCR10 and a cleavage product of UQCRFS1). This cytochrome bc1 complex then forms a dimer. Requires heme b as cofactor.

Its subcellular location is the mitochondrion inner membrane. Component of the ubiquinol-cytochrome c reductase complex (complex III or cytochrome b-c1 complex) that is part of the mitochondrial respiratory chain. The b-c1 complex mediates electron transfer from ubiquinol to cytochrome c. Contributes to the generation of a proton gradient across the mitochondrial membrane that is then used for ATP synthesis. This chain is Cytochrome b (MT-CYB), found in Alectoris graeca (Rock partridge).